Reading from the N-terminus, the 354-residue chain is Macrosialin (354 aa).

The N-terminal stretch at 1-21 (MRLAVLFSGALLGLLAAQGTG) is a signal peptide. The Extracellular portion of the chain corresponds to 22 to 319 (NDCPHKKSAT…QSFSCPSDRS (298 aa)). Positions 23–140 (DCPHKKSATL…SPGFTSSAHP (118 aa)) are mucin-like. A compositionally biased stretch (low complexity) spans 40-51 (PTVTESTGTTSH). Residues 40 to 162 (PTVTESTGTT…SKETIGDYTW (123 aa)) form a disordered region. Positions 52 to 61 (RTTKSHKTTT) are enriched in basic residues. The segment covering 62–84 (HRTTTTGTTSHGPTTATHNPTTT) has biased composition (low complexity). 2 tandem repeats follow at residues 70 to 99 (TSHGPTTATHNPTTTSHGNVTVHPTSNSTA) and 100 to 129 (TSQGPSTATHSPATTSHGNATVHPTSNSTA). Residues 70–129 (TSHGPTTATHNPTTTSHGNVTVHPTSNSTATSQGPSTATHSPATTSHGNATVHPTSNSTA) are 2 X 30 AA tandem repeats. Over residues 85 to 102 (SHGNVTVHPTSNSTATSQ) the composition is skewed to polar residues. N88 and N96 each carry an N-linked (GlcNAc...) asparagine glycan. The segment covering 103 to 117 (GPSTATHSPATTSHG) has biased composition (low complexity). N-linked (GlcNAc...) asparagine glycans are attached at residues N118 and N126. The span at 121–135 (VHPTSNSTATSPGFT) shows a compositional bias: polar residues. The span at 140 to 150 (PEPPPPSPSPS) shows a compositional bias: pro residues. N-linked (GlcNAc...) asparagine glycosylation is found at N164, N199, N246, N261, and N279. A disulfide bond links C169 and C207. Residues C277 and C314 are joined by a disulfide bond. The chain crosses the membrane as a helical span at residues 320–344 (ILLPLIIGLILLGLLALVLIAFCII). Over 345 to 354 (RRRPSAYQAL) the chain is Cytoplasmic.

The protein belongs to the LAMP family. In terms of processing, N- and O-glycosylated. As to expression, highly expressed by blood monocytes and tissue macrophages. Also expressed in lymphocytes, fibroblasts and endothelial cells. Expressed in many tumor cell lines which could allow them to attach to selectins on vascular endothelium, facilitating their dissemination to secondary sites.

It localises to the cell membrane. The protein localises to the endosome membrane. Its subcellular location is the lysosome membrane. Functionally, could play a role in phagocytic activities of tissue macrophages, both in intracellular lysosomal metabolism and extracellular cell-cell and cell-pathogen interactions. Binds to tissue- and organ-specific lectins or selectins, allowing homing of macrophage subsets to particular sites. Rapid recirculation of CD68 from endosomes and lysosomes to the plasma membrane may allow macrophages to crawl over selectin-bearing substrates or other cells. The protein is Macrosialin (CD68) of Homo sapiens (Human).